Here is a 223-residue protein sequence, read N- to C-terminus: Probable tRNA-splicing endonuclease subunit tsp-1 (223 aa).

The interval M1–Q55 is disordered. Low complexity predominate over residues R30–Q55.

Belongs to the SEN15 family. As to quaternary structure, tRNA splicing endonuclease is a heterotetramer composed of tsp-2/sen2, tsp-1/sen15, tsp-4/sen34 and tsp-5/sen54. Interacts directly with tsp-4/sen34.

In terms of biological role, non-catalytic subunit of the tRNA-splicing endonuclease complex, a complex responsible for identification and cleavage of the splice sites in pre-tRNA. It cleaves pre-tRNA at the 5' and 3' splice sites to release the intron. The products are an intron and two tRNA half-molecules bearing 2',3' cyclic phosphate and 5'-OH termini. There are no conserved sequences at the splice sites, but the intron is invariably located at the same site in the gene, placing the splice sites an invariant distance from the constant structural features of the tRNA body. This chain is Probable tRNA-splicing endonuclease subunit tsp-1 (tsp-1), found in Neurospora crassa (strain ATCC 24698 / 74-OR23-1A / CBS 708.71 / DSM 1257 / FGSC 987).